Reading from the N-terminus, the 508-residue chain is Photosystem II CP47 reaction center protein (508 aa).

6 helical membrane-spanning segments follow: residues 21-36 (SVHI…WAGS), 101-115 (IVFS…IWHW), 140-156 (GIHL…FGAF), 203-218 (IAAG…FHLS), 237-252 (VLSS…AFVV), and 457-472 (SFAL…HGAR).

It belongs to the PsbB/PsbC family. PsbB subfamily. As to quaternary structure, PSII is composed of 1 copy each of membrane proteins PsbA, PsbB, PsbC, PsbD, PsbE, PsbF, PsbH, PsbI, PsbJ, PsbK, PsbL, PsbM, PsbT, PsbX, PsbY, PsbZ, Psb30/Ycf12, at least 3 peripheral proteins of the oxygen-evolving complex and a large number of cofactors. It forms dimeric complexes. It depends on Binds multiple chlorophylls. PSII binds additional chlorophylls, carotenoids and specific lipids. as a cofactor.

It localises to the plastid. The protein resides in the chloroplast thylakoid membrane. In terms of biological role, one of the components of the core complex of photosystem II (PSII). It binds chlorophyll and helps catalyze the primary light-induced photochemical processes of PSII. PSII is a light-driven water:plastoquinone oxidoreductase, using light energy to abstract electrons from H(2)O, generating O(2) and a proton gradient subsequently used for ATP formation. In Platanus occidentalis (Sycamore), this protein is Photosystem II CP47 reaction center protein.